The chain runs to 62 residues: Large ribosomal subunit protein bL28 (62 aa).

The segment at 1–24 is disordered; it reads MARKCVITGRKTKAGNNRSHAMNS. The segment covering 14-24 has biased composition (polar residues); sequence AGNNRSHAMNS.

Belongs to the bacterial ribosomal protein bL28 family.

The sequence is that of Large ribosomal subunit protein bL28 from Bacillus pumilus (strain SAFR-032).